Here is a 103-residue protein sequence, read N- to C-terminus: Urease subunit gamma (103 aa).

This sequence belongs to the urease gamma subunit family. Heterotrimer of UreA (gamma), UreB (beta) and UreC (alpha) subunits. Three heterotrimers associate to form the active enzyme.

Its subcellular location is the cytoplasm. The enzyme catalyses urea + 2 H2O + H(+) = hydrogencarbonate + 2 NH4(+). It participates in nitrogen metabolism; urea degradation; CO(2) and NH(3) from urea (urease route): step 1/1. This Paracoccus denitrificans (strain Pd 1222) protein is Urease subunit gamma.